The chain runs to 185 residues: Adenylyl-sulfate kinase (185 aa).

ATP is bound at residue 13–20; the sequence is GLSGAGKS. Ser-86 (phosphoserine intermediate) is an active-site residue.

This sequence belongs to the APS kinase family.

The enzyme catalyses adenosine 5'-phosphosulfate + ATP = 3'-phosphoadenylyl sulfate + ADP + H(+). It functions in the pathway sulfur metabolism; hydrogen sulfide biosynthesis; sulfite from sulfate: step 2/3. In terms of biological role, catalyzes the synthesis of activated sulfate. The polypeptide is Adenylyl-sulfate kinase (Myxococcus xanthus (strain DK1622)).